Reading from the N-terminus, the 415-residue chain is Serine--tRNA ligase (415 aa).

231-233 (TAE) serves as a coordination point for L-serine. 262–264 (RSE) provides a ligand contact to ATP. Residue Glu285 participates in L-serine binding. 349–352 (EISS) lines the ATP pocket. Position 383 (Ser383) interacts with L-serine.

This sequence belongs to the class-II aminoacyl-tRNA synthetase family. Type-1 seryl-tRNA synthetase subfamily. Homodimer. The tRNA molecule binds across the dimer.

The protein resides in the cytoplasm. It catalyses the reaction tRNA(Ser) + L-serine + ATP = L-seryl-tRNA(Ser) + AMP + diphosphate + H(+). The enzyme catalyses tRNA(Sec) + L-serine + ATP = L-seryl-tRNA(Sec) + AMP + diphosphate + H(+). It participates in aminoacyl-tRNA biosynthesis; selenocysteinyl-tRNA(Sec) biosynthesis; L-seryl-tRNA(Sec) from L-serine and tRNA(Sec): step 1/1. In terms of biological role, catalyzes the attachment of serine to tRNA(Ser). Is also able to aminoacylate tRNA(Sec) with serine, to form the misacylated tRNA L-seryl-tRNA(Sec), which will be further converted into selenocysteinyl-tRNA(Sec). This is Serine--tRNA ligase from Helicobacter pylori (strain ATCC 700392 / 26695) (Campylobacter pylori).